The chain runs to 225 residues: MFLVYFNTFLIIILLFGIIGIYILTFVFNIDFLINNNKIYILSYNATNINNINNLNLYDYSDIIFLTNFNINNNLLVTQANNLQDIPIFNVNNIISNQYNFYSASSNNVNILLGLRKTLNINRNPFLLFRNTSLAIVFNNNETFHCYISSNQNSDVLDIVSHIEFMKSRYNKYVIIGEIPVNNNISINNILNNFAIITNVRLIDKYNSIISFLNINVGTLFVINP.

This is an uncharacterized protein from Amsacta moorei entomopoxvirus (AmEPV).